Consider the following 94-residue polypeptide: Large ribosomal subunit protein uL23 (94 aa).

It belongs to the universal ribosomal protein uL23 family. In terms of assembly, part of the 50S ribosomal subunit. Contacts protein L29, and trigger factor when it is bound to the ribosome.

One of the early assembly proteins it binds 23S rRNA. One of the proteins that surrounds the polypeptide exit tunnel on the outside of the ribosome. Forms the main docking site for trigger factor binding to the ribosome. The sequence is that of Large ribosomal subunit protein uL23 from Treponema denticola (strain ATCC 35405 / DSM 14222 / CIP 103919 / JCM 8153 / KCTC 15104).